We begin with the raw amino-acid sequence, 619 residues long: E3 ubiquitin-protein ligase DTX4 (619 aa).

2 WWE domains span residues 1 to 78 (MLLA…PVRR) and 79 to 155 (NYYD…RVRR). Disordered regions lie at residues 238–281 (KPLD…PGPN) and 358–389 (PPPVSKSEIKSIPGVSNTSRKTTKKQAKKGKT). A compositionally biased stretch (polar residues) spans 261 to 273 (QASSMPTGTTMGS). A compositionally biased stretch (basic residues) spans 378–387 (KTTKKQAKKG). Residues 409 to 468 (CTICMERLTAPSGYKGPQPTVKPDLVGKLSRCGHVYHIYCLVAMYNNGNKDGSLQCPTCK) form an RING-type; atypical zinc finger.

The protein belongs to the Deltex family. Interacts with NLRP4.

It localises to the cytoplasm. The enzyme catalyses S-ubiquitinyl-[E2 ubiquitin-conjugating enzyme]-L-cysteine + [acceptor protein]-L-lysine = [E2 ubiquitin-conjugating enzyme]-L-cysteine + N(6)-ubiquitinyl-[acceptor protein]-L-lysine.. It participates in protein modification; protein ubiquitination. Functionally, regulator of Notch signaling, a signaling pathway involved in cell-cell communications that regulates a broad spectrum of cell-fate determinations. Functions as a ubiquitin ligase protein in vivo, mediating 'Lys48'-linked polyubiquitination and promoting degradation of TBK1, targeting to TBK1 requires interaction with NLRP4. The chain is E3 ubiquitin-protein ligase DTX4 (DTX4) from Homo sapiens (Human).